The primary structure comprises 124 residues: MaFF-interacting protein (124 aa).

Positions 54-96 form a coiled coil; that stretch reads LVSEVEELYKSITALREKLLQAEQSLRNLKDIHMSLEKDVTAM.

Belongs to the tektin family. As to quaternary structure, interacts with MIS18A. Interacts (via its coiled-coil region) with MAFF. Strongly expressed in brain, kidney and ovary. Moderately expressed in liver, spleen, thymus, prostate, testis, small intestine and colon. Weakly expressed in heart, placenta, lung and leukocytes.

It localises to the cytoplasm. The protein resides in the nucleus. The protein localises to the nucleolus. Its function is as follows. Acts as a coactivator of MAFF transcriptional activity. Inhibits cell growth and colony-forming efficiency. The polypeptide is MaFF-interacting protein (MAFIP) (Homo sapiens (Human)).